Here is a 207-residue protein sequence, read N- to C-terminus: Large ribosomal subunit protein uL4 (207 aa).

The interval 56–75 (EVSGTTKKPFKQKGTGNARQ) is disordered.

The protein belongs to the universal ribosomal protein uL4 family. In terms of assembly, part of the 50S ribosomal subunit.

One of the primary rRNA binding proteins, this protein initially binds near the 5'-end of the 23S rRNA. It is important during the early stages of 50S assembly. It makes multiple contacts with different domains of the 23S rRNA in the assembled 50S subunit and ribosome. Its function is as follows. Forms part of the polypeptide exit tunnel. This chain is Large ribosomal subunit protein uL4, found in Rickettsia prowazekii (strain Madrid E).